A 418-amino-acid polypeptide reads, in one-letter code: Equilibrative nucleotide transporter 3 (418 aa).

11 helical membrane passes run 20–40 (MVVC…MLTI), 56–76 (VLTL…AYHE), 86–106 (LIGY…DLAT), 112–132 (IGPY…DATV), 142–162 (LMCP…GALT), 186–206 (MFLA…AYVF), 264–284 (YAVN…GFLY), 291–311 (GLGD…DLVG), 326–346 (KLIT…YFTA), 353–373 (WMIM…VCIM), and 392–412 (LVIF…LWLI).

It belongs to the SLC29A/ENT transporter (TC 2.A.57) family. Expressed in root tips, vasculature of roots and leaves, and meristems of leaf primordia. Expressed in flowers and siliques.

It localises to the cell membrane. Its function is as follows. Nucleoside transporter that functions as a pyrimidine nucleoside carrier in all organs. Has high affinity for adenosine and uridine when expressed in a heterologous system (yeast). Mediates proton-dependent adenosine or uridine transport in Xenopus oocytes. In Arabidopsis thaliana (Mouse-ear cress), this protein is Equilibrative nucleotide transporter 3.